Reading from the N-terminus, the 286-residue chain is Polyamine aminopropyltransferase (286 aa).

In terms of domain architecture, PABS spans 5–238 (PLWHETLHDH…GIMTFAWASD (234 aa)). Gln33 contributes to the S-methyl-5'-thioadenosine binding site. Spermidine-binding residues include His64 and Asp88. S-methyl-5'-thioadenosine contacts are provided by residues Glu108 and 140–141 (DG). The Proton acceptor role is filled by Asp158. 158 to 161 (DCTD) is a spermidine binding site. Pro165 serves as a coordination point for S-methyl-5'-thioadenosine.

The protein belongs to the spermidine/spermine synthase family. As to quaternary structure, homodimer or homotetramer.

The protein localises to the cytoplasm. The enzyme catalyses S-adenosyl 3-(methylsulfanyl)propylamine + putrescine = S-methyl-5'-thioadenosine + spermidine + H(+). It participates in amine and polyamine biosynthesis; spermidine biosynthesis; spermidine from putrescine: step 1/1. In terms of biological role, catalyzes the irreversible transfer of a propylamine group from the amino donor S-adenosylmethioninamine (decarboxy-AdoMet) to putrescine (1,4-diaminobutane) to yield spermidine. The protein is Polyamine aminopropyltransferase of Klebsiella pneumoniae (strain 342).